A 152-amino-acid chain; its full sequence is MMKKIDVKILDPRIGEEFPLPTYATPGSAGLDLRACLDNAVELAPGQTELLPTGLAIHIGDEQLAAVILPRSGLGHKHGVVLGNLVGLIDSDYQGQLMVSVWNRGDKAFTIQPGERIAQIVFVPVVQAEFNLVEDFETSERGSGGFGHSGRQ.

Substrate is bound by residues 71–73 (RSG), N84, 88–90 (LID), and M98.

The protein belongs to the dUTPase family. Mg(2+) is required as a cofactor.

It carries out the reaction dUTP + H2O = dUMP + diphosphate + H(+). It participates in pyrimidine metabolism; dUMP biosynthesis; dUMP from dCTP (dUTP route): step 2/2. Its function is as follows. This enzyme is involved in nucleotide metabolism: it produces dUMP, the immediate precursor of thymidine nucleotides and it decreases the intracellular concentration of dUTP so that uracil cannot be incorporated into DNA. The polypeptide is Deoxyuridine 5'-triphosphate nucleotidohydrolase (Photorhabdus laumondii subsp. laumondii (strain DSM 15139 / CIP 105565 / TT01) (Photorhabdus luminescens subsp. laumondii)).